We begin with the raw amino-acid sequence, 457 residues long: tRNA modification GTPase MnmE (457 aa).

(6S)-5-formyl-5,6,7,8-tetrahydrofolate contacts are provided by R22, E83, and R122. Positions 219–378 (GLATAIIGRP…LEEAIKALFF (160 aa)) constitute a TrmE-type G domain. N229 contacts K(+). GTP contacts are provided by residues 229-234 (NVGKSS), 248-254 (TDIAGTT), and 273-276 (DTAG). S233 is a Mg(2+) binding site. K(+)-binding residues include T248, I250, and T253. T254 is a Mg(2+) binding site. K457 lines the (6S)-5-formyl-5,6,7,8-tetrahydrofolate pocket.

This sequence belongs to the TRAFAC class TrmE-Era-EngA-EngB-Septin-like GTPase superfamily. TrmE GTPase family. As to quaternary structure, homodimer. Heterotetramer of two MnmE and two MnmG subunits. K(+) is required as a cofactor.

The protein localises to the cytoplasm. In terms of biological role, exhibits a very high intrinsic GTPase hydrolysis rate. Involved in the addition of a carboxymethylaminomethyl (cmnm) group at the wobble position (U34) of certain tRNAs, forming tRNA-cmnm(5)s(2)U34. The polypeptide is tRNA modification GTPase MnmE (Listeria innocua serovar 6a (strain ATCC BAA-680 / CLIP 11262)).